Here is a 135-residue protein sequence, read N- to C-terminus: Large ribosomal subunit protein uL16c (135 aa).

The span at 1–23 (MLSPKKTKFRKEHRGRMKGRSSR) shows a compositional bias: basic residues. The interval 1-24 (MLSPKKTKFRKEHRGRMKGRSSRG) is disordered.

It belongs to the universal ribosomal protein uL16 family. As to quaternary structure, part of the 50S ribosomal subunit.

The protein resides in the plastid. Its subcellular location is the chloroplast. This Pelargonium hortorum (Common geranium) protein is Large ribosomal subunit protein uL16c.